The chain runs to 280 residues: Small ribosomal subunit protein uS2 (280 aa).

Belongs to the universal ribosomal protein uS2 family.

The chain is Small ribosomal subunit protein uS2 from Desulforapulum autotrophicum (strain ATCC 43914 / DSM 3382 / VKM B-1955 / HRM2) (Desulfobacterium autotrophicum).